The primary structure comprises 212 residues: Small ribosomal subunit protein eS6 (212 aa).

The protein belongs to the eukaryotic ribosomal protein eS6 family.

This is Small ribosomal subunit protein eS6 from Metallosphaera sedula (strain ATCC 51363 / DSM 5348 / JCM 9185 / NBRC 15509 / TH2).